Here is a 544-residue protein sequence, read N- to C-terminus: MNQSRRILRTVYLSLFLIGLFMLINDIFSSNILSSKSSDKEVQFDLNKSFDDNEMSSVKSNSFNLINKSQDIIVETGIYVATFSTFKGNLVSLKLKNHLNLEKNPTDLINIDRKNETFFDISFDYFVDDLFLYKKIDDFNHEFKAYFKNNGKTYEYVKKYTFSKKDEYLMQFKVTVNGLEDYNLFDFDSYKIIFSSEIERLSDKAKLQYNNYLSQIIYYDNKLKYGKDGLRINNPRWIGSSTKYFGVLVSKENMEVEFKKERGTLKSFIINNVRNKKNISDEFFIYAGPKDNRYLDVFDKRDDNTFGLFDIFFGMSVEKSFWYLIQVPMQMVMQVFYDVIPNWGLSIIFLTIVVRILIFPLTFKGFRATAELSKLQPKMKELQAKFKHDPKKLNEEMGRLYKEEGVNPLGGCLPVILQLPIFFALYSLVNNLFLLRGASFIPGWIDDLSIGDSVYHFGYKLYFVSWTDIRILPFIMMFTQLGSTIVSSNMDLKNLGAQQKFLYFGMPIMFFFILYNMPSGLLIYWITTNIFTILQQYYIKMHLS.

5 consecutive transmembrane segments (helical) span residues Leu-13–Leu-33, Trp-343–Phe-363, Leu-409–Val-429, Leu-461–Leu-481, and Met-506–Ile-526.

This sequence belongs to the OXA1/ALB3/YidC family. Type 1 subfamily. In terms of assembly, interacts with the Sec translocase complex via SecD. Specifically interacts with transmembrane segments of nascent integral membrane proteins during membrane integration.

It is found in the cell inner membrane. Required for the insertion and/or proper folding and/or complex formation of integral membrane proteins into the membrane. Involved in integration of membrane proteins that insert both dependently and independently of the Sec translocase complex, as well as at least some lipoproteins. Aids folding of multispanning membrane proteins. The sequence is that of Membrane protein insertase YidC from Borreliella burgdorferi (strain ATCC 35210 / DSM 4680 / CIP 102532 / B31) (Borrelia burgdorferi).